A 134-amino-acid polypeptide reads, in one-letter code: Histone H2A (134 aa).

Gly residues predominate over residues 1–11 (MTGGGKSGGKA). The disordered stretch occupies residues 1–24 (MTGGGKSGGKASGSKNAQSRSSKA). 2 positions are modified to N6-acetyllysine: lysine 6 and lysine 10. Residue glutamine 107 is modified to N5-methylglutamine.

The protein belongs to the histone H2A family. The nucleosome is a histone octamer containing two molecules each of H2A, H2B, H3 and H4 assembled in one H3-H4 heterotetramer and two H2A-H2B heterodimers. The octamer wraps approximately 147 bp of DNA. In terms of processing, acetylated by ESA1 to form H2AK4ac and H2AK7ac.

The protein resides in the nucleus. It is found in the chromosome. Core component of nucleosome. Nucleosomes wrap and compact DNA into chromatin, limiting DNA accessibility to the cellular machineries which require DNA as a template. Histones thereby play a central role in transcription regulation, DNA repair, DNA replication and chromosomal stability. DNA accessibility is regulated via a complex set of post-translational modifications of histones, also called histone code, and nucleosome remodeling. This chain is Histone H2A (HTA1), found in Gibberella zeae (strain ATCC MYA-4620 / CBS 123657 / FGSC 9075 / NRRL 31084 / PH-1) (Wheat head blight fungus).